The following is a 181-amino-acid chain: uncharacterized protein (181 aa).

Residues 1–14 (MQKCIMRSTEFKTH) lie on the Cytoplasmic side of the membrane. Residues 15 to 35 (FSFHSIFSFPLSAALLALISA) traverse the membrane as a helical segment. The Extracellular portion of the chain corresponds to 36-58 (SEPASKAFINVQFISSPLVKKEV). The chain crosses the membrane as a helical span at residues 59–79 (LPFIVSFHSLSSNGILSFSPF). Residues 80-84 (TSSNL) are Cytoplasmic-facing. A helical membrane pass occupies residues 85–105 (SIAQLPFLIKVPLLSMGSLAL). Residues 106 to 116 (ENFNKFIPRAD) lie on the Extracellular side of the membrane. A helical transmembrane segment spans residues 117-137 (LVAAWVTIIMVFTFGNFLSTL). The Cytoplasmic segment spans residues 138–153 (SIKTGQNLWHLSKISS). The helical transmembrane segment at 154–174 (SVSPLLLGIILGSQSGEIMLG) threads the bilayer. The Extracellular portion of the chain corresponds to 175 to 181 (KNLLITS).

It localises to the membrane. This is an uncharacterized protein from Saccharomyces cerevisiae (strain ATCC 204508 / S288c) (Baker's yeast).